The chain runs to 314 residues: Ribosomal RNA small subunit methyltransferase H (314 aa).

S-adenosyl-L-methionine contacts are provided by residues 35–37, aspartate 55, phenylalanine 79, aspartate 101, and glutamine 108; that span reads GGH. Residues 276–296 form a disordered region; that stretch reads QGGQTLKPVGKKLMPSEAEVA.

Belongs to the methyltransferase superfamily. RsmH family.

It is found in the cytoplasm. It carries out the reaction cytidine(1402) in 16S rRNA + S-adenosyl-L-methionine = N(4)-methylcytidine(1402) in 16S rRNA + S-adenosyl-L-homocysteine + H(+). Functionally, specifically methylates the N4 position of cytidine in position 1402 (C1402) of 16S rRNA. The sequence is that of Ribosomal RNA small subunit methyltransferase H from Pectobacterium atrosepticum (strain SCRI 1043 / ATCC BAA-672) (Erwinia carotovora subsp. atroseptica).